Reading from the N-terminus, the 33-residue chain is Cytochrome b6-f complex subunit 8 (33 aa).

The chain crosses the membrane as a helical span at residues 2 to 22 (IFTLGWASLAAIFTFSIAMVV).

The protein belongs to the PetN family. In terms of assembly, the 4 large subunits of the cytochrome b6-f complex are cytochrome b6, subunit IV (17 kDa polypeptide, PetD), cytochrome f and the Rieske protein, while the 4 small subunits are PetG, PetL, PetM and PetN. The complex functions as a dimer.

It is found in the cellular thylakoid membrane. In terms of biological role, component of the cytochrome b6-f complex, which mediates electron transfer between photosystem II (PSII) and photosystem I (PSI), cyclic electron flow around PSI, and state transitions. The chain is Cytochrome b6-f complex subunit 8 from Prochlorococcus marinus (strain NATL2A).